Consider the following 341-residue polypeptide: MDYKKSGVDIEAGYKSVELMKEAVKSTMREEVLGGIGGFSGAFSLAKIKEMEEPVLLSGTDGCGTKVKLAFIMDKHDTIGIDAVAMCVNDVVCAGGEPLFFLDYIACGKNYPEKIATIVGGVAEGCRQSECALIGGETAEHPGLMPQDEYDLAGFAVGVVDKKDLITGENIKPGDTLIGIASSGVHSNGFSLVRSVFTMTEESLNTYYDSLGKTLGEALLAPTKIYVKTMKEIKKAGVKVKGCSHITGGGFYENVPRMLPDGVKAVIKKDSYEVPPIFKMLAEDGNIEEHMMYNTFNMGIGLVLAVDPADVDTVMEAVKAAGETPYVIGSIEAGEKGVTLC.

The protein belongs to the AIR synthase family.

The protein localises to the cytoplasm. The enzyme catalyses 2-formamido-N(1)-(5-O-phospho-beta-D-ribosyl)acetamidine + ATP = 5-amino-1-(5-phospho-beta-D-ribosyl)imidazole + ADP + phosphate + H(+). It functions in the pathway purine metabolism; IMP biosynthesis via de novo pathway; 5-amino-1-(5-phospho-D-ribosyl)imidazole from N(2)-formyl-N(1)-(5-phospho-D-ribosyl)glycinamide: step 2/2. In Lachnospira eligens (strain ATCC 27750 / DSM 3376 / VPI C15-48 / C15-B4) (Eubacterium eligens), this protein is Phosphoribosylformylglycinamidine cyclo-ligase.